The sequence spans 191 residues: Inosine triphosphate pyrophosphatase (191 aa).

9 to 14 (TGNAKK) lines the ITP pocket. Glu-39 contributes to the Mg(2+) binding site. Residues Lys-51, 67–68 (DT), Lys-84, 143–146 (FGWD), Lys-166, and 171–172 (HR) each bind ITP.

Belongs to the HAM1 NTPase family. Homodimer. It depends on Mg(2+) as a cofactor. Requires Mn(2+) as cofactor.

The protein resides in the cytoplasm. It carries out the reaction ITP + H2O = IMP + diphosphate + H(+). The enzyme catalyses dITP + H2O = dIMP + diphosphate + H(+). The catalysed reaction is XTP + H2O = XMP + diphosphate + H(+). Functionally, pyrophosphatase that hydrolyzes non-canonical purine nucleotides such as inosine triphosphate (ITP), deoxyinosine triphosphate (dITP) or xanthosine 5'-triphosphate (XTP) to their respective monophosphate derivatives. The enzyme does not distinguish between the deoxy- and ribose forms. Probably excludes non-canonical purines from RNA and DNA precursor pools, thus preventing their incorporation into RNA and DNA and avoiding chromosomal lesions. In Drosophila melanogaster (Fruit fly), this protein is Inosine triphosphate pyrophosphatase.